We begin with the raw amino-acid sequence, 516 residues long: Tyrosine decarboxylase 3 (516 aa).

K319 carries the post-translational modification N6-(pyridoxal phosphate)lysine.

Belongs to the group II decarboxylase family. As to quaternary structure, homodimer. The cofactor is pyridoxal 5'-phosphate.

The catalysed reaction is L-tyrosine + H(+) = tyramine + CO2. The sequence is that of Tyrosine decarboxylase 3 (TYRDC-3) from Petroselinum crispum (Parsley).